The chain runs to 601 residues: Potassium voltage-gated channel subfamily A member 5 (601 aa).

The interval 1–200 is tetramerization domain; the sequence is MEIALVPLEN…FYQLGDEAME (200 aa). The Cytoplasmic portion of the chain corresponds to 1–236; that stretch reads MEIALVPLEN…LIFEYPESSG (236 aa). The interval 19-93 is disordered; the sequence is GGEAGTGCSQ…DEEGEGDPAL (75 aa). A compositionally biased stretch (pro residues) spans 65–74; that stretch reads RPLPPLPQDP. Lys-210 participates in a covalent cross-link: Glycyl lysine isopeptide (Lys-Gly) (interchain with G-Cter in SUMO). Residues 237–258 traverse the membrane as a helical segment; sequence SARGIAIVSVLVILISIITFCL. Residues 259 to 312 lie on the Extracellular side of the membrane; the sequence is ETLPEFRDERELLRHPPVPHQPLGPSRGANGSGPLAPPSGPTVAPLLPRTLADP. The interval 275–297 is disordered; it reads PVPHQPLGPSRGANGSGPLAPPS. Residue Asn-288 is glycosylated (N-linked (GlcNAc...) asparagine). A helical membrane pass occupies residues 313–334; the sequence is FFIVETTCVIWFTFELLVRFFA. Cys-335 is lipidated: S-palmitoyl cysteine. At 335–345 the chain is on the cytoplasmic side; that stretch reads CPSKAEFSRNI. Residues 346-366 traverse the membrane as a helical segment; the sequence is MNIIDVVAIFPYFITLGTELA. Residues 367–383 are Extracellular-facing; that stretch reads EQPGGGGGGQNGQQAMS. The helical; Voltage-sensor transmembrane segment at 384–404 threads the bilayer; it reads LAILRVIRLVRVFRIFKLSRH. Over 405–419 the chain is Cytoplasmic; sequence SKGLQILGKTLQASM. An S4-S5 linker region spans residues 406–419; it reads KGLQILGKTLQASM. Residues 420–441 traverse the membrane as a helical segment; sequence RELGLLIFFLFIGVILFSSAVY. The Extracellular portion of the chain corresponds to 442–455; the sequence is FAEADNQETHFSSI. The segment at residues 456–467 is an intramembrane region (helical); the sequence is PDAFWWAVVTMT. A Selectivity filter motif is present at residues 468–473; that stretch reads TVGYGD. The stretch at 468–475 is an intramembrane region; it reads TVGYGDMR. Residues 476 to 482 are Extracellular-facing; the sequence is PVTVGGK. The chain crosses the membrane as a helical span at residues 483-511; that stretch reads IVGSLCAIAGVLTIALPVPVIVSNFNYFY. Topologically, residues 512-601 are cytoplasmic; sequence HRETDHEEQA…CLDTSRETDL (90 aa). Positions 521–545 are disordered; it reads AALKEEQGSQSHGTGLDSGGPRKAS. A Glycyl lysine isopeptide (Lys-Gly) (interchain with G-Cter in SUMO) cross-link involves residue Lys-524. The PDZ-binding signature appears at 599 to 601; sequence TDL.

The protein belongs to the potassium channel family. A (Shaker) (TC 1.A.1.2) subfamily. Kv1.5/KCNA5 sub-subfamily. As to quaternary structure, homotetramer and heterotetramer of potassium channel proteins. Interacts with DLG1, which enhances channel currents. Forms a ternary complex with DLG1 and CAV3. Interacts with KCNAB1. Interacts with UBE2I. Interacts with XIRP2; the interaction is required for normal action potential configuration in the heart. In terms of processing, glycosylated. Sumoylated on Lys-210, and Lys-524, preferentially with SUMO3. Sumoylation regulates the voltage sensitivity of the channel.

The protein localises to the cell membrane. It carries out the reaction K(+)(in) = K(+)(out). Voltage-gated potassium channel that mediates transmembrane potassium transport in excitable membranes. Forms tetrameric potassium-selective channels through which potassium ions pass in accordance with their electrochemical gradient. The channel alternates between opened and closed conformations in response to the voltage difference across the membrane. Can form functional homotetrameric channels and heterotetrameric channels that contain variable proportions of KCNA1, KCNA2, KCNA4, KCNA5, and possibly other family members as well; channel properties depend on the type of alpha subunits that are part of the channel. Channel properties are modulated by cytoplasmic beta subunits that regulate the subcellular location of the alpha subunits and promote rapid inactivation. Homotetrameric channels display rapid activation and slow inactivation. Required for normal electrical conduction including formation of the infranodal ventricular conduction system and normal action potential configuration, as a result of its interaction with XIRP2. May play a role in regulating the secretion of insulin in normal pancreatic islets. The polypeptide is Potassium voltage-gated channel subfamily A member 5 (KCNA5) (Mustela putorius furo (European domestic ferret)).